Reading from the N-terminus, the 139-residue chain is Arsenate reductase (139 aa).

Residues Cys10, Cys82, and Cys89 each act as nucleophile in the active site. Cystine bridges form between Cys10/Cys82 and Cys82/Cys89.

Belongs to the low molecular weight phosphotyrosine protein phosphatase family. Thioredoxin-coupled ArsC subfamily.

It localises to the cytoplasm. The enzyme catalyses arsenate + [thioredoxin]-dithiol + H(+) = arsenite + [thioredoxin]-disulfide + H2O. Functionally, catalyzes the reduction of arsenate [As(V)] to arsenite [As(III)]. The chain is Arsenate reductase from Oceanobacillus iheyensis (strain DSM 14371 / CIP 107618 / JCM 11309 / KCTC 3954 / HTE831).